The primary structure comprises 502 residues: Regulator of hypoxia-inducible factor 1 (502 aa).

Transmembrane regions (helical) follow at residues 54-74 (LLAW…VFSC), 92-112 (LDVL…NHTG), 138-158 (IFGA…VLSG), 188-208 (LAPS…NALL), 241-261 (MGYL…PIFL), 272-292 (MALT…YCTA), 335-355 (GPFL…YIMV), 367-387 (LIVA…PNAG), 396-416 (TAVF…ALYF), 437-457 (AYLL…LQAA), and 465-485 (LVLP…YLFI).

Expressed in intestine, some sensory neurons in the head, body wall muscles and socket cells.

It localises to the endoplasmic reticulum membrane. Functionally, involved in the response to variation in environmental oxygen levels by inhibiting hif-1-mediated gene transcription in a vhl-1-independent manner. Plays a role in susceptibility to killing mediated by P.aeruginosa and by pore-forming toxins produced by B.thuringiensis. Probably by preventing hif-1 transcriptional activity, regulates behavioral responses, such as locomotion speed following acute reoxygenation. Plays a role in normal egg-laying probably by regulating spermatogenesis and in body morphogenesis. The sequence is that of Regulator of hypoxia-inducible factor 1 from Caenorhabditis elegans.